Consider the following 258-residue polypeptide: Alpha-fibrinogenase albofibrase (258 aa).

The first 18 residues, 1-18 (MVLIRVLANLLILQLSYA), serve as a signal peptide directing secretion. Positions 19–24 (QKSSEL) are excised as a propeptide. Positions 25-249 (VVGGDECNIN…YNDWIQSIIA (225 aa)) constitute a Peptidase S1 domain. Cystine bridges form between Cys-31–Cys-163, Cys-50–Cys-66, Cys-98–Cys-256, Cys-142–Cys-210, Cys-174–Cys-189, and Cys-200–Cys-225. The N-linked (GlcNAc...) asparagine glycan is linked to Asn-44. Residues His-65 and Asp-110 each act as charge relay system in the active site. Ser-204 (charge relay system) is an active-site residue.

This sequence belongs to the peptidase S1 family. Snake venom subfamily. As to quaternary structure, monomer. In terms of tissue distribution, expressed by the venom gland.

Its subcellular location is the secreted. The recombinant protein has fibrinogenolytic activity against the Aalpha chain (FGA) of fibrinogen. Activates plasminogen (PLG) (is 4-fold less active than urokinase). Has weak thrombin-like enzyme activity. Has enzymatic activity against a trypsin-like substrate (S-3013) and shows a weaker activity on an activated protein C substrate (S-3125). The protein is Alpha-fibrinogenase albofibrase of Trimeresurus albolabris (White-lipped pit viper).